A 269-amino-acid chain; its full sequence is Tryptophan synthase alpha chain (269 aa).

Active-site proton acceptor residues include Glu49 and Asp60.

The protein belongs to the TrpA family. Tetramer of two alpha and two beta chains.

The catalysed reaction is (1S,2R)-1-C-(indol-3-yl)glycerol 3-phosphate + L-serine = D-glyceraldehyde 3-phosphate + L-tryptophan + H2O. Its pathway is amino-acid biosynthesis; L-tryptophan biosynthesis; L-tryptophan from chorismate: step 5/5. In terms of biological role, the alpha subunit is responsible for the aldol cleavage of indoleglycerol phosphate to indole and glyceraldehyde 3-phosphate. This Pseudomonas putida (Arthrobacter siderocapsulatus) protein is Tryptophan synthase alpha chain.